Consider the following 202-residue polypeptide: tRNA (guanine-N(7)-)-methyltransferase (202 aa).

Residues Glu-34, Glu-59, Asp-86, and Asp-107 each coordinate S-adenosyl-L-methionine. The active site involves Asp-107. Residues Lys-111, Asp-143, and 181–184 (TDYE) each bind substrate.

The protein belongs to the class I-like SAM-binding methyltransferase superfamily. TrmB family.

The enzyme catalyses guanosine(46) in tRNA + S-adenosyl-L-methionine = N(7)-methylguanosine(46) in tRNA + S-adenosyl-L-homocysteine. It functions in the pathway tRNA modification; N(7)-methylguanine-tRNA biosynthesis. In terms of biological role, catalyzes the formation of N(7)-methylguanine at position 46 (m7G46) in tRNA. The chain is tRNA (guanine-N(7)-)-methyltransferase from Metamycoplasma hominis (strain ATCC 23114 / DSM 25592 / NBRC 14850 / NCTC 10111 / PG21) (Mycoplasma hominis).